Here is a 98-residue protein sequence, read N- to C-terminus: Integration host factor subunit alpha (98 aa).

The tract at residues 54 to 74 (LRDKSSRPGRNPKTGESVPVS) is disordered.

The protein belongs to the bacterial histone-like protein family. In terms of assembly, heterodimer of an alpha and a beta chain.

This protein is one of the two subunits of integration host factor, a specific DNA-binding protein that functions in genetic recombination as well as in transcriptional and translational control. The sequence is that of Integration host factor subunit alpha (ihfA) from Pasteurella multocida (strain Pm70).